The primary structure comprises 686 residues: Antigen peptide transporter 2 (686 aa).

Residues 1-6 (MRLPDL) lie on the Lumenal side of the membrane. A helical membrane pass occupies residues 7 to 27 (RPWTSLLLVDAALLWLLQGPL). Residues 28 to 56 (GTLLPQGLPGLWLEGTLRLGGLWGLLKLR) are Cytoplasmic-facing. A helical transmembrane segment spans residues 57–77 (GLLGFVGTLLLPLCLATPLTV). Over 78–98 (SLRALVAGASRAPPARVASAP) the chain is Lumenal. A helical transmembrane segment spans residues 99–119 (WSWLLVGYGAAGLSWSLWAVL). The Cytoplasmic segment spans residues 120 to 148 (SPPGAQEKEQDQVNNKVLMWRLLKLSRPD). A helical membrane pass occupies residues 149 to 169 (LPLLVAAFFFLVLAVLGETLI). The ABC transmembrane type-1 domain maps to 152 to 435 (LVAAFFFLVL…LVYIYGDMLS (284 aa)). Topologically, residues 170–187 (PHYSGRVIDILGGDFDPH) are lumenal. A helical membrane pass occupies residues 188 to 208 (AFASAIFFMCLFSFGSSLSAG). Over 209-266 (CRGGCFTYTMSRINLRIREQLFSSLLRQDLGFFQETKTGELNSRLSSDTTLMSNWLPL) the chain is Cytoplasmic. Residues 267 to 287 (NANVLLRSLVKVVGLYGFMLS) traverse the membrane as a helical segment. Over 288-293 (ISPRLT) the chain is Lumenal. The chain crosses the membrane as a helical span at residues 294–314 (LLSLLHMPFTIAAEKVYNTRH). A part of the peptide-binding site region spans residues 301 to 389 (PFTIAAEKVY…RRVLHLGVQM (89 aa)). The Cytoplasmic portion of the chain corresponds to 315–374 (QEVLREIQDAVARAGQVVREAVGGLQTVRSFGAEEHEVCRYKEALEQCRQLYWRRDLERA). Residues 375 to 395 (LYLLVRRVLHLGVQMLMLSCG) traverse the membrane as a helical segment. Over 396 to 408 (LQQMQDGELTQGS) the chain is Lumenal. Residues 409-429 (LLSFMIYQESVGSYVQTLVYI) form a helical membrane-spanning segment. Positions 414–433 (IYQESVGSYVQTLVYIYGDM) are part of the peptide-binding site. Residues 430–686 (YGDMLSNVGA…EGKLQKLAQL (257 aa)) lie on the Cytoplasmic side of the membrane. Positions 468 to 686 (VKFQDVSFAY…EGKLQKLAQL (219 aa)) constitute an ABC transporter domain. 503-510 (GPNGSGKS) lines the ATP pocket.

Belongs to the ABC transporter superfamily. ABCB family. MHC peptide exporter (TC 3.A.1.209) subfamily. As to quaternary structure, heterodimer of TAP1 and TAP2 (TAP1-TAP2). A component of the peptide loading complex (PLC), interacts via TAPBP with MHCI heterodimer; this interaction mediates peptide-MHCI assembly. Recruits TAPBP in a 1:1 stoichiometry. Interacts with classical MHCI such as HLA-A*02-B2M; this interaction is obligatory for the loading of peptide epitopes. Interacts with non-classical MHCI molecules including HLA-E-B2M and HLA-F-B2M as well as PLC component CALR before the peptide loading. In terms of assembly, (Microbial infection) Interacts with Epstein-Barr virus BLNF2a. (Microbial infection) Interacts with herpes simplex virus US12/ICP47. As to quaternary structure, (Microbial infection) Interacts with adenovirus E3-19K glycoprotein, which binds TAP1-TAP2 and acts as a TAPBP inhibitor, preventing TAP1-TAP2 association with MHCI. Requires Mg(2+) as cofactor.

It is found in the endoplasmic reticulum membrane. The enzyme catalyses a peptide antigen(in) + ATP + H2O = a peptide antigen(out) + ADP + phosphate + H(+). With respect to regulation, inhibited at high ER lumenal peptide concentrations. Its activity is regulated as follows. (Microbial infection) Inhibited by herpes simplex virus US12/ICP47 protein, which blocks the peptide-binding site of TAP1-TAP2. (Microbial infection) Inhibited by human cytomegalovirus US6 glycoprotein, which binds to the lumenal side of TAP1-TAP2 complex and inhibits peptide translocation by specifically blocking ATP-binding and preventing TAP1-TAP2 conformational rearrangement induced by peptide binding. Its function is as follows. ABC transporter associated with antigen processing. In complex with TAP1 mediates unidirectional translocation of peptide antigens from cytosol to endoplasmic reticulum (ER) for loading onto MHC class I (MHCI) molecules. Uses the chemical energy of ATP to export peptides against the concentration gradient. During the transport cycle alternates between 'inward-facing' state with peptide binding site facing the cytosol to 'outward-facing' state with peptide binding site facing the ER lumen. Peptide antigen binding to ATP-loaded TAP1-TAP2 induces a switch to hydrolysis-competent 'outward-facing' conformation ready for peptide loading onto nascent MHCI molecules. Subsequently ATP hydrolysis resets the transporter to the 'inward facing' state for a new cycle. Typically transports intracellular peptide antigens of 8 to 13 amino acids that arise from cytosolic proteolysis via IFNG-induced immunoproteasome. Binds peptides with free N- and C-termini, the first three and the C-terminal residues being critical. Preferentially selects peptides having a highly hydrophobic residue at position 3 and hydrophobic or charged residues at the C-terminal anchor. Proline at position 2 has the most destabilizing effect. As a component of the peptide loading complex (PLC), acts as a molecular scaffold essential for peptide-MHCI assembly and antigen presentation. The polypeptide is Antigen peptide transporter 2 (Homo sapiens (Human)).